The sequence spans 703 residues: Polyribonucleotide nucleotidyltransferase (703 aa).

2 residues coordinate Mg(2+): Asp-488 and Asp-494. In terms of domain architecture, KH spans 555–614; it reads PKIVKMQINPDKIKDVIGPGGKIITKIIDETGVKIDIEQTGEVFISGIEIDMIKKAQELI. The S1 motif domain maps to 624–692; the sequence is GKTYKGKVSR…EKGRVNLSRK (69 aa).

This sequence belongs to the polyribonucleotide nucleotidyltransferase family. Requires Mg(2+) as cofactor.

It is found in the cytoplasm. The enzyme catalyses RNA(n+1) + phosphate = RNA(n) + a ribonucleoside 5'-diphosphate. Its function is as follows. Involved in mRNA degradation. Catalyzes the phosphorolysis of single-stranded polyribonucleotides processively in the 3'- to 5'-direction. The sequence is that of Polyribonucleotide nucleotidyltransferase from Clostridioides difficile (strain 630) (Peptoclostridium difficile).